The primary structure comprises 476 residues: ATP synthase subunit beta (476 aa).

153 to 160 serves as a coordination point for ATP; sequence GGAGVGKT.

It belongs to the ATPase alpha/beta chains family. F-type ATPases have 2 components, CF(1) - the catalytic core - and CF(0) - the membrane proton channel. CF(1) has five subunits: alpha(3), beta(3), gamma(1), delta(1), epsilon(1). CF(0) has three main subunits: a(1), b(2) and c(9-12). The alpha and beta chains form an alternating ring which encloses part of the gamma chain. CF(1) is attached to CF(0) by a central stalk formed by the gamma and epsilon chains, while a peripheral stalk is formed by the delta and b chains.

It is found in the cell membrane. The enzyme catalyses ATP + H2O + 4 H(+)(in) = ADP + phosphate + 5 H(+)(out). Its function is as follows. Produces ATP from ADP in the presence of a proton gradient across the membrane. The catalytic sites are hosted primarily by the beta subunits. The polypeptide is ATP synthase subunit beta (Latilactobacillus sakei subsp. sakei (strain 23K) (Lactobacillus sakei subsp. sakei)).